The primary structure comprises 98 residues: NADH-ubiquinone oxidoreductase chain 4L (98 aa).

3 helical membrane passes run 1-21, 28-48, and 61-81; these read MASINLNIIMAFIMALMGVLI, STLLCLEGMMLSLFILVTLLI, and LILLVFSACEAGVGLALLVTI.

The protein belongs to the complex I subunit 4L family. As to quaternary structure, core subunit of respiratory chain NADH dehydrogenase (Complex I) which is composed of 45 different subunits.

The protein resides in the mitochondrion inner membrane. The enzyme catalyses a ubiquinone + NADH + 5 H(+)(in) = a ubiquinol + NAD(+) + 4 H(+)(out). Its function is as follows. Core subunit of the mitochondrial membrane respiratory chain NADH dehydrogenase (Complex I) which catalyzes electron transfer from NADH through the respiratory chain, using ubiquinone as an electron acceptor. Part of the enzyme membrane arm which is embedded in the lipid bilayer and involved in proton translocation. This chain is NADH-ubiquinone oxidoreductase chain 4L (MT-ND4L), found in Thylamys elegans (Elegant fat-tailed mouse opossum).